We begin with the raw amino-acid sequence, 443 residues long: Delta(6)-fatty-acid desaturase fat-3 (443 aa).

A Cytochrome b5 heme-binding domain is found at methionine 1 to aspartate 71. 3 consecutive transmembrane segments (helical) span residues isoleucine 136 to leucine 156, threonine 296 to leucine 316, and valine 318 to phenylalanine 338.

Belongs to the fatty acid desaturase type 1 family.

It is found in the membrane. It carries out the reaction (9Z,12Z)-octadecadienoyl-CoA + 2 Fe(II)-[cytochrome b5] + O2 + 2 H(+) = (6Z,9Z,12Z)-octadecatrienoyl-CoA + 2 Fe(III)-[cytochrome b5] + 2 H2O. The catalysed reaction is (9Z,12Z,15Z)-octadecatrienoyl-CoA + 2 Fe(II)-[cytochrome b5] + O2 + 2 H(+) = (6Z,9Z,12Z,15Z)-octadecatetraenoyl-CoA + 2 Fe(III)-[cytochrome b5] + 2 H2O. The protein operates within lipid metabolism; polyunsaturated fatty acid biosynthesis. Functionally, can function as a Delta(6) fatty acid desaturase. Introduces a double bond in the fatty acid chain 6 carbons away from carboxy terminal to biosynthesize polyunsaturated fatty acids (PUFAs) endogenously (PUFAs are essential for membrane structure and many cellular and physiological processes). Acts on a variety of substrates such as linoleoyl-CoA ((9Z,12Z)-octadecadienoyl-CoA, C18:2n-6) and alpha-linolenoyl-CoA ((9Z,12Z,15Z)-octadecatrienoyl-CoA, C18:3n-3) to produce gamma-linolenoyl-CoA ((6Z,9Z,12Z)-octadecatrienoyl-CoA, C18:3n-6) and (6Z,9Z,12Z,15Z)-octadecatetraenoyl-CoA (18:4n-3) respectively. Unlike plants, Caenorhabditis elegans desaturases seem to use fatty acyl-CoAs as substrates. Plays a role in synaptic vesicle recycling by regulating synaptojanin unc-26 localization at synapses. This is Delta(6)-fatty-acid desaturase fat-3 (fat-3) from Caenorhabditis elegans.